We begin with the raw amino-acid sequence, 184 residues long: MPNTQSPYIAFAMLLSSNGHPVTPAELHGLLIGRSCAGAGFDADAWLADAAQLLETEPGDTVRNALIGLQEMVKGELNSDDMAIVLLLPSDDAALSDRATALGQWCQGFITGFGLNAGGKDLSDEAKDVLQDLVAISQVQEALEESEDGESDYMEVMEYLRVAPLLLFSELAKPAAPAPKPSLH.

It belongs to the UPF0149 family.

This is UPF0149 protein PputGB1_5261 from Pseudomonas putida (strain GB-1).